The chain runs to 432 residues: Cyclic GMP-AMP synthase (432 aa).

Residue 110 to 115 (QGSFQY) coordinates GTP. Mg(2+)-binding residues include Asp129 and Asp131. Arg180 lines the ATP pocket. Position 191 (Asp191) interacts with Mg(2+). Ser255 contacts ATP. The GTP site is built by Lys283, Ser297, and Asp344. Residue Gly432 forms a Glycyl cysteine dithioester (Gly-Cys) (interchain with C-13 in Cap2) linkage. Residue Gly432 forms a Glycyl cysteine dithioester (Gly-Cys) (interchain with C-493 in Cap2) linkage. A Glycyl cysteine dithioester (Gly-Cys) (interchain with C-513 in Cap2) cross-link involves residue Gly432. Gly432 participates in a covalent cross-link: Glycyl lysine isopeptide (Gly-Lys) (interchain with K-? in acceptor proteins).

The protein belongs to the CD-NTase family. A02 subfamily. As to quaternary structure, a Cap2 dimer is bound on either side by a DncV monomer. Mg(2+) is required as a cofactor. In terms of processing, in bacteria expressing capV-dncV-cap2-cap3, this protein is conjugated to about 130 cellular proteins by Cap2, most of which are involved in metabolism; more conjugated protein is found in the absence of Cap3. Most conjugation occurs via an isopeptide bond with the epsilon-amine of Lys on the target protein, but Cys-conjugation also occurs, including to Cap2. Conjugation or deconjugation from cellular proteins does not change the DncV activity in vitro, but does so in vivo during infection. (Microbial infection) During phage T4 infection is conjugated to at least 2 T4 proteins (fibritin (wac) and dexA.2).

It catalyses the reaction GTP + ATP = 3',3'-cGAMP + 2 diphosphate. Primed for activation by Cap2 which conjugates it to cellular proteins. cGAMP production is induced in phage T4 infected cells in a manner that requires Cap2 and Cap3, as well as a C-terminal Ala or Gly residue in this protein. Cyclic nucleotide synthase (second messenger synthase) of a CBASS antivirus system. CBASS (cyclic oligonucleotide-based antiphage signaling system) provides immunity against bacteriophages. The CD-NTase protein (DncV, this protein) synthesizes cyclic nucleotides in response to infection; these serve as specific second messenger signals. The signals activate a diverse range of effectors, leading to bacterial cell death and thus abortive phage infection. A type II-A(GA) CBASS system. In terms of biological role, catalyzes the synthesis of 3',3'-cyclic GMP-AMP (cGAMP) from GTP and ATP, a second messenger in cell signal transduction. Its product controls the activity of cGAMP-activated phospholipase CapV, a patatin-like lipase that is a direct cGAMP receptor encoded in the dncV operon. Its function is as follows. Protects E.coli against phage infection. When capV and dncV are introduced in E.coli MG1655 there is 1000-fold protection against phage P1; protection against other phage (T2, T4, T5, T6 and lambda-vir) requires the 2 subsequent genes (cap2 and cap3). In another paper the capV-dncV-cap2-cap3 operon gives 10(4)-10(5)-fold protection against phages lambda, T2, T4 and T6, about 1000-fold protection against P1 and 10-fold protection against T5. The protein is Cyclic GMP-AMP synthase of Escherichia coli (strain TW11681).